A 313-amino-acid chain; its full sequence is MEAIGVLMMCPMSTYLEQELDKRFKLFRYWTQPAQRDFLALQAESIRAVVGNSNAGADAELIDALPKLEIVSSFSVGLDKVDLIKCEEKGVRVTNTPDVLTDDVADLAIGLILAVLRRICECDKYVRRGAWKFGDFKLTTKFSGKRVGIIGLGRIGLAVAERAEAFDCPISYFSRSKKPNTNYTYYGSVVELASNSDILVVACPLTPETTHIINREVIDALGPKGVLINIGRGPHVDEPELVSALVEGRLGGAGLDVFEREPEVPEKLFGLENVVLLPHVGSGTVETRKVMADLVVGNLEAHFSGKPLLTPVV.

NADP(+) is bound by residues 152 to 155 (LGRI), 174 to 176 (SRS), and Ile-230. The active site involves Arg-232. NADP(+) is bound at residue Asp-256. The active site involves Glu-261. Residue His-279 is the Proton donor of the active site.

Belongs to the D-isomer specific 2-hydroxyacid dehydrogenase family.

The enzyme catalyses (2R)-2-hydroxy-3-(4-hydroxyphenyl)propanoate + NAD(+) = 3-(4-hydroxyphenyl)pyruvate + NADH + H(+). The catalysed reaction is (2R)-2-hydroxy-3-(4-hydroxyphenyl)propanoate + NADP(+) = 3-(4-hydroxyphenyl)pyruvate + NADPH + H(+). It carries out the reaction (2R)-3-(3,4-dihydroxyphenyl)lactate + NADP(+) = 3-(3,4-dihydroxyphenyl)pyruvate + NADPH + H(+). It catalyses the reaction (2R)-3-(3,4-dihydroxyphenyl)lactate + NAD(+) = 3-(3,4-dihydroxyphenyl)pyruvate + NADH + H(+). Its function is as follows. Catalyzes the NAD(P)H-dependent reduction of 4-hydroxyphenylpyruvate to 4-hydroxyphenyllactate and 3,4-dihydroxyphenylpyruvate to 3,4-dihydroxyphenyllactate in the biosynthesis of rosmarinic acid. Rosmarinic acid is an ester of caffeic acid and 3,4-dihydroxyphenyllactic acid. NADP is the preferred substrate. The sequence is that of Hydroxyphenylpyruvate reductase (HPPR) from Plectranthus scutellarioides (Coleus).